A 321-amino-acid polypeptide reads, in one-letter code: o-succinylbenzoate synthase (321 aa).

The Proton donor role is filled by lysine 110. Residues aspartate 138, glutamate 165, and aspartate 188 each coordinate Mg(2+). Residue lysine 212 is the Proton acceptor of the active site.

It belongs to the mandelate racemase/muconate lactonizing enzyme family. MenC type 1 subfamily. The cofactor is a divalent metal cation.

It carries out the reaction (1R,6R)-6-hydroxy-2-succinyl-cyclohexa-2,4-diene-1-carboxylate = 2-succinylbenzoate + H2O. The protein operates within quinol/quinone metabolism; 1,4-dihydroxy-2-naphthoate biosynthesis; 1,4-dihydroxy-2-naphthoate from chorismate: step 4/7. It participates in quinol/quinone metabolism; menaquinone biosynthesis. Functionally, converts 2-succinyl-6-hydroxy-2,4-cyclohexadiene-1-carboxylate (SHCHC) to 2-succinylbenzoate (OSB). The sequence is that of o-succinylbenzoate synthase from Mycolicibacterium smegmatis (strain ATCC 700084 / mc(2)155) (Mycobacterium smegmatis).